We begin with the raw amino-acid sequence, 807 residues long: MAATELRGVVGPGPAAIAALGGGGAGPPVVGGGGGRGDAGPGSGAASGTVVAAAAGGPGPGAGGVAAAGPAPAPPTGGSGGSGAGGSGSAREGWLFKWTNYIKGYQRRWFVLSNGLLSYYRSKAEMRHTCRGTINLATANITVEDSCNFIISNGGAQTYHLKASSEVERQRWVTALELAKAKAVKMLAESDESGDEESVSQTDKTELQNTLRTLSSKVEDLSTCNDLIAKHGTALQRSLSELESLKLPAESNEKIKQVNERATLFRITSNAMINACRDFLMLAQTHSKKWQKSLQYERDQRIRLEETLEQLAKQHNHLERAFRGATVLPANTPGNVGSGKDQCCSGKGDMSDEDDENEFFDAPEIITMPENLGHKRTGSNISGASSDISLDEQYKHQLEETKKEKRTRIPYKPNYSLNLWSIMKNCIGKELSKIPMPVNFNEPLSMLQRLTEDLEYHELLDRAAKCENSLEQLCYVAAFTVSSYSTTVFRTSKPFNPLLGETFELDRLEENGYRSLCEQVSHHPPAAAHHAESKNGWTLRQEIKITSKFRGKYLSIMPLGTIHCIFHATGHHYTWKKVTTTVHNIIVGKLWIDQSGEIDIVNHKTGDKCNLKFVPYSYFSRDVARKVTGEVTDPSGKVHFALLGTWDEKMECFKVQPVIGENGGDARQRGHEAEESRVMLWKRNPLPKNAENMYYFSELALTLNAWESGTAPTDSRLRPDQRLMENGRWDEANAEKQRLEEKQRLSRKKREAEAMKATEDGTPYDPYKALWFERKKDPVTKELTHIYRGEYWECKEKQDWSSCPDIF.

An N-acetylalanine modification is found at Ala2. The disordered stretch occupies residues 61 to 86 (GAGGVAAAGPAPAPPTGGSGGSGAGG). A compositionally biased stretch (gly residues) spans 77 to 86 (GGSGGSGAGG). A PH domain is found at 88 to 181 (GSAREGWLFK…WVTALELAKA (94 aa)). 117–122 (LSYYRS) provides a ligand contact to a 1,2-diacyl-sn-glycero-3-phospho-(1D-myo-inositol 4-phosphate). Residues Ser190, Ser193, Ser198, Ser238, and Ser240 each carry the phosphoserine modification. Positions 291-326 (QKSLQYERDQRIRLEETLEQLAKQHNHLERAFRGAT) form a coiled coil. Gln314 serves as a coordination point for 20-hydroxycholesterol. Gln314 lines the 25-hydroxycholesterol pocket. Gln314 serves as a coordination point for 7beta-hydroxycholesterol. Residue Gln314 participates in cholesterol binding. An ergosterol-binding site is contributed by Gln314. Residues 329-353 (PANTPGNVGSGKDQCCSGKGDMSDE) are disordered. Phosphoserine is present on residues Ser338, Ser345, and Ser351. The FFAT motif lies at 358 to 364 (EFFDAPE). Thr377 carries the post-translational modification Phosphothreonine. A phosphoserine mark is found at Ser379, Ser382, Ser385, Ser386, and Ser389. A 1,2-diacyl-sn-glycero-3-phospho-(1D-myo-inositol 4-phosphate) is bound by residues 493–496 (KPFN) and 522–523 (HH). Positions 710 to 759 (TAPTDSRLRPDQRLMENGRWDEANAEKQRLEEKQRLSRKKREAEAMKATE) are disordered. The segment covering 715 to 759 (SRLRPDQRLMENGRWDEANAEKQRLEEKQRLSRKKREAEAMKATE) has biased composition (basic and acidic residues). The stretch at 730–760 (DEANAEKQRLEEKQRLSRKKREAEAMKATED) forms a coiled coil.

The protein belongs to the OSBP family. In terms of assembly, homodimer or homotrimer. Interacts (via FFAT motif) with VAPA. Interacts (via C-terminus) with RELCH (via the third HEAT repeat). Found in a complex composed of RELCH, OSBP1 and RAB11A. As to expression, widely expressed.

It localises to the cytoplasm. The protein localises to the cytosol. Its subcellular location is the perinuclear region. It is found in the golgi apparatus membrane. The protein resides in the endoplasmic reticulum membrane. It localises to the golgi apparatus. The protein localises to the trans-Golgi network. Its function is as follows. Lipid transporter involved in lipid countertransport between the Golgi complex and membranes of the endoplasmic reticulum: specifically exchanges sterol with phosphatidylinositol 4-phosphate (PI4P), delivering sterol to the Golgi in exchange for PI4P, which is degraded by the SAC1/SACM1L phosphatase in the endoplasmic reticulum. Binds cholesterol and a range of oxysterols including 25-hydroxycholesterol. Cholesterol binding promotes the formation of a complex with PP2A and a tyrosine phosphatase which dephosphorylates ERK1/2, whereas 25-hydroxycholesterol causes its disassembly. Regulates cholesterol efflux by decreasing ABCA1 stability. The sequence is that of Oxysterol-binding protein 1 from Homo sapiens (Human).